The primary structure comprises 70 residues: Small integral membrane protein 42 (70 aa).

A helical transmembrane segment spans residues Leu26 to Val46.

The protein resides in the membrane. This is Small integral membrane protein 42 from Homo sapiens (Human).